The sequence spans 128 residues: Large ribosomal subunit protein bL17 (128 aa).

The protein belongs to the bacterial ribosomal protein bL17 family. Part of the 50S ribosomal subunit. Contacts protein L32.

The polypeptide is Large ribosomal subunit protein bL17 (Streptococcus pneumoniae serotype 4 (strain ATCC BAA-334 / TIGR4)).